A 239-amino-acid polypeptide reads, in one-letter code: tRNA (guanine-N(7)-)-methyltransferase (239 aa).

Residues E69, E94, D121, and D144 each coordinate S-adenosyl-L-methionine. The active site involves D144. K148 lines the substrate pocket. An interaction with RNA region spans residues R150–R155. Substrate contacts are provided by residues D180 and T217 to E220.

This sequence belongs to the class I-like SAM-binding methyltransferase superfamily. TrmB family. In terms of assembly, monomer.

The enzyme catalyses guanosine(46) in tRNA + S-adenosyl-L-methionine = N(7)-methylguanosine(46) in tRNA + S-adenosyl-L-homocysteine. It participates in tRNA modification; N(7)-methylguanine-tRNA biosynthesis. Catalyzes the formation of N(7)-methylguanine at position 46 (m7G46) in tRNA. In Escherichia coli O6:H1 (strain CFT073 / ATCC 700928 / UPEC), this protein is tRNA (guanine-N(7)-)-methyltransferase.